Reading from the N-terminus, the 570-residue chain is La-related protein 7 (570 aa).

At Met-1 the chain carries N-acetylmethionine. Positions 1–16 are enriched in basic and acidic residues; sequence METENQKTMEESTKRK. 2 disordered regions span residues 1–24 and 180–364; these read METE…KRSR and LNNP…ERHK. In terms of domain architecture, HTH La-type RNA-binding spans 22–116; it reads RSRVKQVLAD…KPLGERPKDE (95 aa). The region spanning 119–197 is the RRM domain; sequence RTVYVELLPK…PRKPGIFPKT (79 aa). A compositionally biased stretch (basic residues) spans 213 to 222; the sequence is KKKKKKKGRI. Residue Lys-231 forms a Glycyl lysine isopeptide (Lys-Gly) (interchain with G-Cter in SUMO2) linkage. Phosphothreonine is present on Thr-251. 2 positions are modified to phosphoserine: Ser-253 and Ser-256. At Thr-260 the chain carries Phosphothreonine. The segment covering 286–295 has biased composition (basic and acidic residues); sequence RAGKRERCSA. Residues Ser-294 and Ser-334 each carry the phosphoserine modification. Phosphothreonine is present on Thr-335. The span at 340 to 349 shows a compositional bias: basic and acidic residues; it reads ETDRKGDSLS. Phosphoserine is present on Ser-347. Positions 350 to 363 are enriched in basic residues; sequence KVKRKHKKKHKERH. A Glycyl lysine isopeptide (Lys-Gly) (interchain with G-Cter in SUMO2) cross-link involves residue Lys-406. The xRRM domain maps to 438–551; it reads QFVTGVIVKI…TEKLITKAEK (114 aa).

This sequence belongs to the LARP7 family. In terms of assembly, core component of the 7SK RNP complex, at least composed of 7SK RNA, LARP7, MEPCE, HEXIM1 (or HEXIM2) and P-TEFb (composed of CDK9 and CCNT1/cyclin-T1). Interacts with METTL16. Interacts with RBM7; upon genotoxic stress this interaction is enhanced, triggering the release of inactive P-TEFb complex from the core, yielding to P-TEFb complex activation. Associates with box C/D small nucleolar ribonucleoprotein (snoRNP) complexes.

The protein resides in the nucleus. The protein localises to the nucleoplasm. Functionally, RNA-binding protein that specifically binds distinct small nuclear RNA (snRNAs) and regulates their processing and function. Specifically binds the 7SK snRNA (7SK RNA) and acts as a core component of the 7SK ribonucleoprotein (RNP) complex, thereby acting as a negative regulator of transcription elongation by RNA polymerase II. The 7SK RNP complex sequesters the positive transcription elongation factor b (P-TEFb) in a large inactive 7SK RNP complex preventing RNA polymerase II phosphorylation and subsequent transcriptional elongation. The 7SK RNP complex also promotes snRNA gene transcription by RNA polymerase II via interaction with the little elongation complex (LEC). LARP7 specifically binds to the highly conserved 3'-terminal U-rich stretch of 7SK RNA; on stimulation, remains associated with 7SK RNA, whereas P-TEFb is released from the complex. LARP7 also acts as a regulator of mRNA splicing fidelity by promoting U6 snRNA processing. Specifically binds U6 snRNAs and associates with a subset of box C/D RNP complexes: promotes U6 snRNA 2'-O-methylation by facilitating U6 snRNA loading into box C/D RNP complexes. U6 snRNA 2'-O-methylation is required for mRNA splicing fidelity. Binds U6 snRNAs with a 5'-CAGGG-3' sequence motif. U6 snRNA processing is required for spermatogenesis. The protein is La-related protein 7 of Mus musculus (Mouse).